Here is a 174-residue protein sequence, read N- to C-terminus: Streptothricin acetyltransferase (174 aa).

One can recognise an N-acetyltransferase domain in the interval 20-170 (FIVREVFDVH…AMYWYWFSGA (151 aa)).

It belongs to the acetyltransferase family. GNAT subfamily.

It carries out the reaction streptothricin F + acetyl-CoA = N(beta)-acetylstreptothricin F + CoA + H(+). Its function is as follows. Involved in resistance to streptothricin, a broad-spectrum antibiotic produced by streptomycetes. Detoxifies streptothricin via acetylation of the beta amino group of the first beta-lysyl moiety of streptothricin. In Escherichia coli, this protein is Streptothricin acetyltransferase (sat-1).